The sequence spans 115 residues: uncharacterized protein (115 aa).

Positions 1 to 74 (MGTGLRSQSL…VPGSLGDTEQ (74 aa)) are disordered.

This is an uncharacterized protein from Homo sapiens (Human).